Consider the following 534-residue polypeptide: CTP synthase (534 aa).

The tract at residues 1–267 (MTKYIFVTGG…DQIVCDHLKL (267 aa)) is amidoligase domain. Position 13 (Ser13) interacts with CTP. UTP is bound at residue Ser13. An ATP-binding site is contributed by 14–19 (SIGKGI). Tyr54 serves as a coordination point for L-glutamine. Asp71 contributes to the ATP binding site. Mg(2+) is bound by residues Asp71 and Glu141. Residues 148 to 150 (DIE), 188 to 193 (KTKPTQ), and Lys224 each bind CTP. UTP is bound by residues 188-193 (KTKPTQ) and Lys224. ATP is bound at residue 240–242 (RDV). In terms of domain architecture, Glutamine amidotransferase type-1 spans 292–534 (KIALVGKYVE…FVTAAIKNSN (243 aa)). Gly354 serves as a coordination point for L-glutamine. Cys381 functions as the Nucleophile; for glutamine hydrolysis in the catalytic mechanism. Residues 382–385 (LGMQ), Glu405, and Arg463 each bind L-glutamine. Active-site residues include His508 and Glu510.

The protein belongs to the CTP synthase family. Homotetramer.

It catalyses the reaction UTP + L-glutamine + ATP + H2O = CTP + L-glutamate + ADP + phosphate + 2 H(+). The catalysed reaction is L-glutamine + H2O = L-glutamate + NH4(+). The enzyme catalyses UTP + NH4(+) + ATP = CTP + ADP + phosphate + 2 H(+). The protein operates within pyrimidine metabolism; CTP biosynthesis via de novo pathway; CTP from UDP: step 2/2. With respect to regulation, allosterically activated by GTP, when glutamine is the substrate; GTP has no effect on the reaction when ammonia is the substrate. The allosteric effector GTP functions by stabilizing the protein conformation that binds the tetrahedral intermediate(s) formed during glutamine hydrolysis. Inhibited by the product CTP, via allosteric rather than competitive inhibition. Catalyzes the ATP-dependent amination of UTP to CTP with either L-glutamine or ammonia as the source of nitrogen. Regulates intracellular CTP levels through interactions with the four ribonucleotide triphosphates. In Streptococcus pyogenes serotype M2 (strain MGAS10270), this protein is CTP synthase.